The primary structure comprises 120 residues: Large ribosomal subunit protein uL22 (120 aa).

This sequence belongs to the universal ribosomal protein uL22 family. Part of the 50S ribosomal subunit.

Functionally, this protein binds specifically to 23S rRNA; its binding is stimulated by other ribosomal proteins, e.g. L4, L17, and L20. It is important during the early stages of 50S assembly. It makes multiple contacts with different domains of the 23S rRNA in the assembled 50S subunit and ribosome. The globular domain of the protein is located near the polypeptide exit tunnel on the outside of the subunit, while an extended beta-hairpin is found that lines the wall of the exit tunnel in the center of the 70S ribosome. The chain is Large ribosomal subunit protein uL22 from Rippkaea orientalis (strain PCC 8801 / RF-1) (Cyanothece sp. (strain PCC 8801)).